Consider the following 166-residue polypeptide: ATP synthase subunit b (166 aa).

Residues 10 to 30 form a helical membrane-spanning segment; the sequence is LLFWMIVSFGIVFVILSKYGF.

It belongs to the ATPase B chain family. In terms of assembly, F-type ATPases have 2 components, F(1) - the catalytic core - and F(0) - the membrane proton channel. F(1) has five subunits: alpha(3), beta(3), gamma(1), delta(1), epsilon(1). F(0) has three main subunits: a(1), b(2) and c(10-14). The alpha and beta chains form an alternating ring which encloses part of the gamma chain. F(1) is attached to F(0) by a central stalk formed by the gamma and epsilon chains, while a peripheral stalk is formed by the delta and b chains.

It is found in the cell inner membrane. F(1)F(0) ATP synthase produces ATP from ADP in the presence of a proton or sodium gradient. F-type ATPases consist of two structural domains, F(1) containing the extramembraneous catalytic core and F(0) containing the membrane proton channel, linked together by a central stalk and a peripheral stalk. During catalysis, ATP synthesis in the catalytic domain of F(1) is coupled via a rotary mechanism of the central stalk subunits to proton translocation. Functionally, component of the F(0) channel, it forms part of the peripheral stalk, linking F(1) to F(0). This chain is ATP synthase subunit b, found in Parabacteroides distasonis (strain ATCC 8503 / DSM 20701 / CIP 104284 / JCM 5825 / NCTC 11152).